The primary structure comprises 245 residues: PF03932 family protein CutC (245 aa).

Belongs to the CutC family.

The protein resides in the cytoplasm. This chain is PF03932 family protein CutC, found in Sinorhizobium medicae (strain WSM419) (Ensifer medicae).